The primary structure comprises 142 residues: Hemoglobin subunit beta-2 (142 aa).

One can recognise a Globin domain in the interval Ser2–His142. Heme b contacts are provided by His59 and His88.

This sequence belongs to the globin family. As to quaternary structure, heterotetramer of two alpha chains and two beta chains. Red blood cells.

Functionally, involved in oxygen transport from the lung to the various peripheral tissues. This chain is Hemoglobin subunit beta-2 (HBB2), found in Torpedo marmorata (Marbled electric ray).